Reading from the N-terminus, the 363-residue chain is Probable transglycosylase BTH_I0986 (363 aa).

Belongs to the glycosyltransferase group 1 family. Glycosyltransferase 4 subfamily.

Probably a transglycosylase. Probably involved in synthesis of the outer membrane receptor for a cellular contact-dependent growth inhibition (CDI) system. This chain is Probable transglycosylase BTH_I0986, found in Burkholderia thailandensis (strain ATCC 700388 / DSM 13276 / CCUG 48851 / CIP 106301 / E264).